Consider the following 389-residue polypeptide: MPLPTTQLRLAMVAGEPSGDLLAASLLGGLRERLPAPTHYYGIGGARMIAQGFDSHWQMDKLTVRGYVEALGQIPEILRIRGELKRQLLAERPDAFIGVDAPDFNFNVEQAARDAGIPSIHFVCPSIWAWRGGRIKKIAKSVDHMLCLFPFEPAILDKAGVASTYVGHPLADEIPLEPDTHGARIALGLPADGPVIAVLPGSRRSEIALIGPTFFAAMALMQQREPGLRFVMPAATPALRELLQPLVDAHPQLALTITDGRSQVAMTAADAILVKSGTVTLEAALLKKPMVISYKVPWLTGQIMRRQGYLPYVGLPNILAGRFVVPELLQHFATPEALADATLTQLRDDANRRTLTEVFTEMHLSLRQNTAAKAAEAVARVLDQRKRRA.

Belongs to the LpxB family.

The catalysed reaction is a lipid X + a UDP-2-N,3-O-bis[(3R)-3-hydroxyacyl]-alpha-D-glucosamine = a lipid A disaccharide + UDP + H(+). It functions in the pathway bacterial outer membrane biogenesis; LPS lipid A biosynthesis. In terms of biological role, condensation of UDP-2,3-diacylglucosamine and 2,3-diacylglucosamine-1-phosphate to form lipid A disaccharide, a precursor of lipid A, a phosphorylated glycolipid that anchors the lipopolysaccharide to the outer membrane of the cell. The chain is Lipid-A-disaccharide synthase from Burkholderia multivorans (strain ATCC 17616 / 249).